The following is a 307-amino-acid chain: Protein FAM76A (307 aa).

Disordered regions lie at residues 142–195 and 287–307; these read QRKH…ESIT and KQAA…ITSP. Polar residues predominate over residues 161–182; the sequence is SRLSGGSHYNSQKTLSTSSIQN. The stretch at 217 to 299 forms a coiled coil; the sequence is IIAQLKEEVA…AALSKSKKSE (83 aa).

It belongs to the FAM76 family.

This is Protein FAM76A (FAM76A) from Bos taurus (Bovine).